The chain runs to 309 residues: HPr kinase/phosphorylase (309 aa).

Residues His138 and Lys159 contribute to the active site. Position 153–160 (153–160) interacts with ATP; sequence GKSGIGKS. Residue Ser160 coordinates Mg(2+). Asp177 (proton acceptor; for phosphorylation activity. Proton donor; for dephosphorylation activity) is an active-site residue. The segment at 201–210 is important for the catalytic mechanism of both phosphorylation and dephosphorylation; it reads IEVRGIGILD. Position 202 (Glu202) interacts with Mg(2+). The active site involves Arg243. An important for the catalytic mechanism of dephosphorylation region spans residues 264-269; sequence PIKPAR.

It belongs to the HPrK/P family. As to quaternary structure, homohexamer. The cofactor is Mg(2+).

It carries out the reaction [HPr protein]-L-serine + ATP = [HPr protein]-O-phospho-L-serine + ADP + H(+). The enzyme catalyses [HPr protein]-O-phospho-L-serine + phosphate + H(+) = [HPr protein]-L-serine + diphosphate. In terms of biological role, catalyzes the ATP- as well as the pyrophosphate-dependent phosphorylation of a specific serine residue in HPr, a phosphocarrier protein of the phosphoenolpyruvate-dependent sugar phosphotransferase system (PTS). HprK/P also catalyzes the pyrophosphate-producing, inorganic phosphate-dependent dephosphorylation (phosphorolysis) of seryl-phosphorylated HPr (P-Ser-HPr). The two antagonistic activities of HprK/P are regulated by several intracellular metabolites, which change their concentration in response to the absence or presence of rapidly metabolisable carbon sources (glucose, fructose, etc.) in the growth medium. Therefore, by controlling the phosphorylation state of HPr, HPrK/P is a sensor enzyme that plays a major role in the regulation of carbon metabolism and sugar transport: it mediates carbon catabolite repression (CCR), and regulates PTS-catalyzed carbohydrate uptake and inducer exclusion. The polypeptide is HPr kinase/phosphorylase (Alkaliphilus metalliredigens (strain QYMF)).